Reading from the N-terminus, the 22-residue chain is Caerin-3.5 (22 aa).

Lys-22 is modified (lysine amide).

In terms of tissue distribution, expressed by the skin dorsal glands.

It is found in the secreted. Shows significant activity against Gram-positive organisms, but is less effective against Gram-negative organisms. This is Caerin-3.5 from Ranoidea gracilenta (Dainty green tree frog).